A 275-amino-acid polypeptide reads, in one-letter code: tRNA pseudouridine synthase A (275 aa).

The Nucleophile role is filled by aspartate 60. Tyrosine 119 contacts substrate.

Belongs to the tRNA pseudouridine synthase TruA family. Homodimer.

It catalyses the reaction uridine(38/39/40) in tRNA = pseudouridine(38/39/40) in tRNA. Its function is as follows. Formation of pseudouridine at positions 38, 39 and 40 in the anticodon stem and loop of transfer RNAs. In Synechocystis sp. (strain ATCC 27184 / PCC 6803 / Kazusa), this protein is tRNA pseudouridine synthase A.